Consider the following 215-residue polypeptide: Large ribosomal subunit protein uL3 (215 aa).

Residues 136–155 (GVSISHRSHGSTGQRQDPGK) form a disordered region. The residue at position 151 (Q151) is an N5-methylglutamine.

The protein belongs to the universal ribosomal protein uL3 family. As to quaternary structure, part of the 50S ribosomal subunit. Forms a cluster with proteins L14 and L19. In terms of processing, methylated by PrmB.

One of the primary rRNA binding proteins, it binds directly near the 3'-end of the 23S rRNA, where it nucleates assembly of the 50S subunit. The polypeptide is Large ribosomal subunit protein uL3 (Rickettsia canadensis (strain McKiel)).